The sequence spans 260 residues: MSDALLHADNLHYRAGGRTLIEGVSLTLAPGEMVALIGPNGAGKSTLLRLLSGYLDPIQGQCRLQGRELAVWTAAQLARRRAVMAQQGSVAFSFRVSEVVAMARAPWSGTPATTVLAEVMTLTGCEMLASREFRRLSGGEQQRVRLAMALAQLWQQDGPEGWLFLDEPTSALDLYHQQALLRLLYQLTRAGKLAVCCILHDVNLAALWADRILLLQQGRLAASGTPAEVLTEVQLRACYQADLRVQTQQEDGVPQIYLRR.

Residues 6 to 242 (LHADNLHYRA…VQLRACYQAD (237 aa)) form the ABC transporter domain. An ATP-binding site is contributed by 38-45 (GPNGAGKS).

It belongs to the ABC transporter superfamily. Heme (hemin) importer (TC 3.A.1.14.5) family. The complex is composed of two ATP-binding proteins (HmuV), two transmembrane proteins (HmuU) and a solute-binding protein (HmuT).

The protein resides in the cell inner membrane. Its function is as follows. Part of the ABC transporter complex HmuTUV involved in hemin import. Responsible for energy coupling to the transport system. The sequence is that of Hemin import ATP-binding protein HmuV from Sodalis glossinidius (strain morsitans).